The chain runs to 128 residues: Small ribosomal subunit protein uS9c (128 aa).

This sequence belongs to the universal ribosomal protein uS9 family.

The protein localises to the plastid. This chain is Small ribosomal subunit protein uS9c (rps9), found in Euglena longa (Euglenophycean alga).